The primary structure comprises 200 residues: Probable GTP-binding protein EngB (200 aa).

The region spanning 24–198 is the EngB-type G domain; it reads EGMEVAFAGR…QAQLDEWLGI (175 aa). GTP contacts are provided by residues 32 to 39, 59 to 63, 77 to 80, 144 to 147, and 177 to 179; these read GRSNVGKS, GRTQM, DLPG, TKSD, and FSA. Mg(2+) contacts are provided by S39 and T61.

It belongs to the TRAFAC class TrmE-Era-EngA-EngB-Septin-like GTPase superfamily. EngB GTPase family. The cofactor is Mg(2+).

In terms of biological role, necessary for normal cell division and for the maintenance of normal septation. The polypeptide is Probable GTP-binding protein EngB (Nitrosococcus oceani (strain ATCC 19707 / BCRC 17464 / JCM 30415 / NCIMB 11848 / C-107)).